Reading from the N-terminus, the 538-residue chain is Putative outer membrane porin BglH (538 aa).

Residues 1 to 25 form the signal peptide; sequence MFRRNIITSAILLMAPLAFSAQSLA.

This sequence belongs to the porin LamB (TC 1.B.3) family.

Its subcellular location is the cell outer membrane. In terms of biological role, may be a sugar porin with a broad carbohydrate specificity. The sequence is that of Putative outer membrane porin BglH (bglH) from Escherichia coli O6:H1 (strain CFT073 / ATCC 700928 / UPEC).